Here is a 204-residue protein sequence, read N- to C-terminus: RNA-free ribonuclease P (204 aa).

Belongs to the HARP family.

The enzyme catalyses Endonucleolytic cleavage of RNA, removing 5'-extranucleotides from tRNA precursor.. Functionally, RNA-free RNase P that catalyzes the removal of the 5'-leader sequence from pre-tRNA to produce the mature 5'-terminus. This is RNA-free ribonuclease P from Ignicoccus hospitalis (strain KIN4/I / DSM 18386 / JCM 14125).